The chain runs to 710 residues: Adenylosuccinate synthetase (710 aa).

Disordered regions lie at residues 1 to 53 and 84 to 110; these read MPVR…PQEA and DEPP…SGRS. Composition is skewed to polar residues over residues 10–27 and 101–110; these read YNNS…STTA and ANASNSSGRS. GTP is bound by residues 180–186 and 210–212; these read GDEGKGK and GHT. The active-site Proton acceptor is Asp-181. Mg(2+)-binding residues include Asp-181 and Gly-210. IMP-binding positions include 181-184, 208-211, Thr-295, Lys-309, Gln-421, Thr-437, and Lys-567; these read DEGK and NAGH. His-211 acts as the Proton donor in catalysis. 563–569 contacts substrate; that stretch reads AVTKKPR. GTP contacts are provided by residues Arg-569 and 697–699; that span reads GNG.

This sequence belongs to the adenylosuccinate synthetase family. Homodimer. It depends on Mg(2+) as a cofactor.

The protein localises to the cytoplasm. It catalyses the reaction IMP + L-aspartate + GTP = N(6)-(1,2-dicarboxyethyl)-AMP + GDP + phosphate + 2 H(+). The protein operates within purine metabolism; AMP biosynthesis via de novo pathway; AMP from IMP: step 1/2. Plays an important role in the salvage pathway for purine nucleotide biosynthesis. Catalyzes the first committed step in the biosynthesis of AMP from IMP. The chain is Adenylosuccinate synthetase (ADSS) from Leishmania donovani.